A 476-amino-acid polypeptide reads, in one-letter code: Vitamin D-binding protein (476 aa).

The N-terminal stretch at 1–16 (MKRVLVLLLALAFGHA) is a signal peptide. Albumin domains follow at residues 17-208 (LERG…QMKH), 209-394 (LSLL…LLKR), and 395-476 (QLTS…TLQS). 14 disulfides stabilise this stretch: Cys-29/Cys-75, Cys-74/Cys-83, Cys-96/Cys-112, Cys-111/Cys-122, Cys-145/Cys-190, Cys-189/Cys-198, Cys-220/Cys-266, Cys-265/Cys-273, Cys-286/Cys-300, Cys-299/Cys-311, Cys-335/Cys-376, Cys-375/Cys-384, Cys-407/Cys-453, and Cys-452/Cys-462. An N-linked (GlcNAc...) asparagine glycan is attached at Asn-288. At Ser-434 the chain carries Phosphoserine.

The protein belongs to the ALB/AFP/VDB family. In terms of assembly, associates with membrane-bound immunoglobulin on the surface of B-lymphocytes and with IgG Fc receptor on the membranes of T-lymphocytes. Interacts with LRP2; the interaction is required for renal uptake of GC in complex with 25-hydroxyvitamin D3.

The protein resides in the secreted. Its function is as follows. Involved in vitamin D transport and storage, scavenging of extracellular G-actin, enhancement of the chemotactic activity of C5 alpha for neutrophils in inflammation and macrophage activation. This chain is Vitamin D-binding protein (Gc), found in Mus musculus (Mouse).